Here is a 727-residue protein sequence, read N- to C-terminus: Epithelial splicing regulatory protein 2 (727 aa).

A disordered region spans residues 1 to 22 (MTPPPPPPPPPGPDPAADPAAD). The residue at position 83 (serine 83) is a Phosphoserine. RRM domains lie at 257 to 353 (TVVR…RFLS), 358 to 438 (VILR…RSTA), and 475 to 555 (DCVR…PCST). Serine 573 is modified (phosphoserine).

The protein belongs to the ESRP family. As to quaternary structure, interacts with RBPMS. As to expression, epithelial cell-specific.

It localises to the nucleus. MRNA splicing factor that regulates the formation of epithelial cell-specific isoforms. Specifically regulates the expression of FGFR2-IIIb, an epithelial cell-specific isoform of FGFR2. Also regulates the splicing of CD44, CTNND1, ENAH, 3 transcripts that undergo changes in splicing during the epithelial-to-mesenchymal transition (EMT). Acts by directly binding specific sequences in mRNAs. Binds the GU-rich sequence motifs in the ISE/ISS-3, a cis-element regulatory region present in the mRNA of FGFR2. This Homo sapiens (Human) protein is Epithelial splicing regulatory protein 2 (ESRP2).